A 199-amino-acid chain; its full sequence is Probable thymidylate kinase (199 aa).

9–16 (GIDGCGKT) provides a ligand contact to ATP.

Belongs to the thymidylate kinase family.

It carries out the reaction dTMP + ATP = dTDP + ADP. This chain is Probable thymidylate kinase, found in Methanococcus maripaludis (strain DSM 14266 / JCM 13030 / NBRC 101832 / S2 / LL).